An 87-amino-acid chain; its full sequence is UPF0335 protein Avi_3695 (87 aa).

The protein belongs to the UPF0335 family.

This chain is UPF0335 protein Avi_3695, found in Allorhizobium ampelinum (strain ATCC BAA-846 / DSM 112012 / S4) (Agrobacterium vitis (strain S4)).